The primary structure comprises 277 residues: Inner kinetochore subunit sim4 (277 aa).

A coiled-coil region spans residues 96–138; sequence NNISDLKKNLHSNKKLEAVLKEELHQIKKFSSDLQSLKSSMGE.

This sequence belongs to the CENP-K/MCM22 family. As to quaternary structure, component of the inner kinetochore constitutive centromere-associated network (CCAN) (also known as central kinetochore Sim4 complex in fission yeast), which is composed of at least cnl2, cnp3, cnp20, fta1, fta2, fta3, fta4, fta6, fta7, mal2, mhf1, mhf2, mis6, mis15, mis17, sim4 and wip1. Interacts with mis6 and dad1.

It is found in the nucleus. It localises to the chromosome. The protein resides in the centromere. Component of the kinetochore, a multiprotein complex that assembles on centromeric DNA and attaches chromosomes to spindle microtubules, mediating chromosome segregation and sister chromatid segregation during meiosis and mitosis. Component of the inner kinetochore constitutive centromere-associated network (CCAN), which serves as a structural platform for outer kinetochore assembly. This Schizosaccharomyces pombe (strain 972 / ATCC 24843) (Fission yeast) protein is Inner kinetochore subunit sim4 (sim4).